The sequence spans 298 residues: MNDLFSNSFKKNQAQLGDVEAGQETMNLDKFFEDVENVKDDMKGVEALYKKLQDSNEECKTVHNAKKVKELRAKMDGDVAMVLKRVKIIKQKLEALEKANANSRNVPGCGPGSSTDRTRSSVVSGLGKKLKDLMDSFQGLRARMNNEYKETVERRYFTITGEKADEQTIDNLIASGESENFLQKAIQEQGRGQILDTISEIQERHDAVKEIEKNLLELHQVFLDMAALVEAQGQQLNNIESHVAKASSFVRRGTDQLQDAREYQKSSRKWTCYAIILFIVIFILLLIPLLPHIMLMLK.

Met1 is subject to N-acetylmethionine. The Cytoplasmic portion of the chain corresponds to Met1 to Ala274. Residues Thr25–Arg155 are a coiled coil. Positions Ile198–Ala260 constitute a t-SNARE coiled-coil homology domain. Residues Ile275–Leu295 form a helical; Anchor for type IV membrane protein membrane-spanning segment. The Vesicular portion of the chain corresponds to Met296–Lys298.

Belongs to the syntaxin family. As to quaternary structure, part of the t-SNARE complex.

Its subcellular location is the membrane. Its function is as follows. Vesicle trafficking protein that functions in the secretory pathway. This chain is Syntaxin-125 (SYP125), found in Arabidopsis thaliana (Mouse-ear cress).